The chain runs to 181 residues: Peptidyl-tRNA hydrolase 2, mitochondrial (181 aa).

Residues 10-32 (YLVHPGTLSLAAGVACGMCLGWG) traverse the membrane as a helical segment. Residues K78, K83, K97, K108, K117, and K179 each participate in a glycyl lysine isopeptide (Lys-Gly) (interchain with G-Cter in ubiquitin) cross-link.

Belongs to the PTH2 family. In terms of assembly, monomer. Post-translationally, ubiquitinated by PRKN during mitophagy, leading to its degradation and enhancement of mitophagy. Deubiquitinated by USP30.

It localises to the mitochondrion outer membrane. The catalysed reaction is an N-acyl-L-alpha-aminoacyl-tRNA + H2O = an N-acyl-L-amino acid + a tRNA + H(+). Its function is as follows. Peptidyl-tRNA hydrolase which releases tRNAs from the ribosome during protein synthesis. Promotes caspase-independent apoptosis by regulating the function of two transcriptional regulators, AES and TLE1. In Mus musculus (Mouse), this protein is Peptidyl-tRNA hydrolase 2, mitochondrial (Ptrh2).